The chain runs to 463 residues: Glutamate--tRNA ligase 2 (463 aa).

A 'HIGH' region motif is present at residues 10 to 20 (PSPTGFLHIGS). The 'KMSKS' region signature appears at 239-243 (KLSKR). Lysine 242 contributes to the ATP binding site.

The protein belongs to the class-I aminoacyl-tRNA synthetase family. Glutamate--tRNA ligase type 1 subfamily. As to quaternary structure, monomer.

The protein localises to the cytoplasm. The catalysed reaction is tRNA(Glu) + L-glutamate + ATP = L-glutamyl-tRNA(Glu) + AMP + diphosphate. Functionally, catalyzes the attachment of glutamate to tRNA(Glu) in a two-step reaction: glutamate is first activated by ATP to form Glu-AMP and then transferred to the acceptor end of tRNA(Glu). In Rickettsia akari (strain Hartford), this protein is Glutamate--tRNA ligase 2.